The chain runs to 369 residues: MSETSLLPRAHGAAVLSAAMRSTPDDFQVDELPAFEPSGEGEHLLLTVRKRGQNTAYIAKKLAHWAGIAEMGVSYAGLKDRHAVTTQRFSVHLPRRIAPDIAALDDTQMQVVESSWHNRKLQRGALHGNRFVLTLRQVQGERDAIEQRLQAIAARGIPNWFGEQRFGRDGGNVAAALAMFGHVQADDGTLLPAPTSRRRLRHDQRSMLLSAARSALFNRVLGARVAQGSWDGALEGEAWMLDGSRSVFGPEPWSEALAERLARFDIHPSGPLWGAGQLRSTDQAAAVEQGALSDPPSIALRQGLEAAGLKQERRALRLRPHGLEYQWLEPQTLQLAFALPPGCYATAVLWELGDVADAGRFNVDVRADA.

The active-site Nucleophile is the aspartate 80. In terms of domain architecture, TRUD spans 156 to 318; sequence GIPNWFGEQR…LKQERRALRL (163 aa).

This sequence belongs to the pseudouridine synthase TruD family.

It catalyses the reaction uridine(13) in tRNA = pseudouridine(13) in tRNA. In terms of biological role, responsible for synthesis of pseudouridine from uracil-13 in transfer RNAs. This Xanthomonas axonopodis pv. citri (strain 306) protein is tRNA pseudouridine synthase D.